A 260-amino-acid polypeptide reads, in one-letter code: Ribosomal RNA small subunit methyltransferase A (260 aa).

Positions 23, 48, 69, 94, and 110 each coordinate S-adenosyl-L-methionine.

Belongs to the class I-like SAM-binding methyltransferase superfamily. rRNA adenine N(6)-methyltransferase family. RsmA subfamily.

It is found in the cytoplasm. The catalysed reaction is adenosine(1518)/adenosine(1519) in 16S rRNA + 4 S-adenosyl-L-methionine = N(6)-dimethyladenosine(1518)/N(6)-dimethyladenosine(1519) in 16S rRNA + 4 S-adenosyl-L-homocysteine + 4 H(+). Specifically dimethylates two adjacent adenosines (A1518 and A1519) in the loop of a conserved hairpin near the 3'-end of 16S rRNA in the 30S particle. May play a critical role in biogenesis of 30S subunits. In Thermotoga neapolitana (strain ATCC 49049 / DSM 4359 / NBRC 107923 / NS-E), this protein is Ribosomal RNA small subunit methyltransferase A.